The chain runs to 401 residues: Voltage-gated potassium channel subunit beta-3 (401 aa).

Polar residues-rich tracts occupy residues 1-14 and 32-41; these read MQVS…TLRS and GVSMAQTKQR. A disordered region spans residues 1–49; that stretch reads MQVSFACTEQTLRSRTSEDRLCPSRPSGGQNGVSMAQTKQRTPPMGAKN. NADP(+) contacts are provided by threonine 90, tryptophan 91, glutamine 97, and aspartate 119. Tyrosine 124 functions as the Proton donor/acceptor in the catalytic mechanism. Asparagine 192, serine 222, arginine 223, glutamine 248, tryptophan 277, serine 278, proline 279, leucine 280, alanine 281, cysteine 282, lysine 288, arginine 298, glycine 357, serine 359, glutamine 363, glutamate 366, and asparagine 367 together coordinate NADP(+).

Belongs to the shaker potassium channel beta subunit family. In terms of assembly, forms heteromultimeric complex with alpha subunits. Identified in potassium channel complexes containing KCNA1 and KCNA2.

It localises to the cytoplasm. Functionally, regulatory subunit of the voltage-gated potassium (Kv) channels composed of pore-forming and potassium-conducting alpha subunits and of regulatory beta subunit. The beta-3/KCNAB3 subunit may mediate closure of potassium channels. Increases and accelerates inactivation of Kv1.1/KCNA1 and Kv2.2/KCNA2 subunit-containing channels. May display nicotinamide adenine dinucleotide phosphate (NADPH)-dependent aldoketoreductase activity. The binding of oxidized and reduced NADP(H) cofactors may be required for the regulation of potassium channel activity. This Xenopus laevis (African clawed frog) protein is Voltage-gated potassium channel subunit beta-3 (kcnab3).